The following is a 309-amino-acid chain: Homoserine O-succinyltransferase (309 aa).

Cys-142 (acyl-thioester intermediate) is an active-site residue. Lys-163 and Ser-192 together coordinate substrate. His-235 acts as the Proton acceptor in catalysis. Residue Glu-237 is part of the active site. Arg-249 is a binding site for substrate.

The protein belongs to the MetA family.

The protein resides in the cytoplasm. It carries out the reaction L-homoserine + succinyl-CoA = O-succinyl-L-homoserine + CoA. It participates in amino-acid biosynthesis; L-methionine biosynthesis via de novo pathway; O-succinyl-L-homoserine from L-homoserine: step 1/1. Functionally, transfers a succinyl group from succinyl-CoA to L-homoserine, forming succinyl-L-homoserine. The sequence is that of Homoserine O-succinyltransferase from Edwardsiella ictaluri (strain 93-146).